The following is a 283-amino-acid chain: Polyamine aminopropyltransferase (283 aa).

The PABS domain maps to 2–238 (ELWYTEEWTE…GHWLFGFASK (237 aa)). Residue Gln31 coordinates S-methyl-5'-thioadenosine. Spermidine is bound by residues His62 and Asp86. S-methyl-5'-thioadenosine-binding positions include Glu106 and 137–138 (DG). Catalysis depends on Asp156, which acts as the Proton acceptor. 156-159 (DSTD) contacts spermidine. Pro163 is a binding site for S-methyl-5'-thioadenosine.

The protein belongs to the spermidine/spermine synthase family. In terms of assembly, homodimer or homotetramer.

Its subcellular location is the cytoplasm. It catalyses the reaction S-adenosyl 3-(methylsulfanyl)propylamine + putrescine = S-methyl-5'-thioadenosine + spermidine + H(+). The protein operates within amine and polyamine biosynthesis; spermidine biosynthesis; spermidine from putrescine: step 1/1. Functionally, catalyzes the irreversible transfer of a propylamine group from the amino donor S-adenosylmethioninamine (decarboxy-AdoMet) to putrescine (1,4-diaminobutane) to yield spermidine. This chain is Polyamine aminopropyltransferase, found in Clostridioides difficile (strain 630) (Peptoclostridium difficile).